Here is a 276-residue protein sequence, read N- to C-terminus: 28 kDa ribonucleoprotein, chloroplastic (276 aa).

The transit peptide at 1–57 directs the protein to the chloroplast; sequence MATNGCLISLPPFFTTTKSISSYPFLSTQLKPISLSSSLPTLLSLNKRTTQFPTFVS. RRM domains follow at residues 97–175 and 191–269; these read AKLF…KAAP and YRIY…AAEE.

The protein resides in the plastid. It is found in the chloroplast. Functionally, probably involved in the 3'-end processing of chloroplast mRNA's. This Nicotiana sylvestris (Wood tobacco) protein is 28 kDa ribonucleoprotein, chloroplastic.